We begin with the raw amino-acid sequence, 756 residues long: Hyperosmolality-gated Ca2+ permeable channel 1.5 (756 aa).

A run of 10 helical transmembrane segments spans residues 7–27 (IGVAATINILTAFAFFIAFAI), 101–121 (IYLLGLKIFFPIACIAFTVMV), 154–174 (SRFWVHLCMAYVITFWTCFVL), 373–393 (LVIAVAFFFLTFFFMIPIAFV), 425–445 (FLPGIALKIFLIVLPSILMLM), 465–485 (YYMFQFINVFLCSIIAGTALQ), 510–530 (ATFFITYIMVDGWAGVAGEIL), 574–594 (FILGLVYAAVSPILLPFILVF), 628–648 (VVIALIVSQLLLMGLLSTKKA), and 651–671 (STPLLFILPVLTIGFHKFCQG). The disordered stretch occupies residues 731–756 (PDKTPDLVATKRGSRRFNSGSAETFT). Polar residues predominate over residues 746–756 (RFNSGSAETFT).

The protein belongs to the CSC1 (TC 1.A.17) family.

It is found in the membrane. Functionally, acts as an osmosensitive calcium-permeable cation channel. The polypeptide is Hyperosmolality-gated Ca2+ permeable channel 1.5 (Arabidopsis thaliana (Mouse-ear cress)).